A 343-amino-acid chain; its full sequence is Phosphoribosylformylglycinamidine cyclo-ligase (343 aa).

Belongs to the AIR synthase family.

It is found in the cytoplasm. It catalyses the reaction 2-formamido-N(1)-(5-O-phospho-beta-D-ribosyl)acetamidine + ATP = 5-amino-1-(5-phospho-beta-D-ribosyl)imidazole + ADP + phosphate + H(+). It participates in purine metabolism; IMP biosynthesis via de novo pathway; 5-amino-1-(5-phospho-D-ribosyl)imidazole from N(2)-formyl-N(1)-(5-phospho-D-ribosyl)glycinamide: step 2/2. The polypeptide is Phosphoribosylformylglycinamidine cyclo-ligase (Carboxydothermus hydrogenoformans (strain ATCC BAA-161 / DSM 6008 / Z-2901)).